The chain runs to 242 residues: MTHSPLAQFDIKKLIDIKMFGFDVSFTNSSIYMLLASILALTYFYLAFYKRKLVPSRLQVSAEIVYNLVADMLNQNIGVKGRKFIPLVFSLFIFILFCNLLGMTPYSFTATSHIIVTFTLAILVFLIVTIVGFVKHGLRFLTLFLPHGTPLWLAPLMIVIELFTYLARPVSLSLRLAANMMAGHVLLKVIAGFTVSLMIYLKFLPIPIMVILIGFEIFVAILQAYIFTILSCMYLNDAINLH.

A run of 6 helical transmembrane segments spans residues 29–49 (SSIY…LAFY), 84–104 (FIPL…LGMT), 114–134 (IIVT…VGFV), 140–160 (FLTL…MIVI), 181–201 (MAGH…MIYL), and 203–223 (FLPI…AILQ).

Belongs to the ATPase A chain family. In terms of assembly, F-type ATPases have 2 components, CF(1) - the catalytic core - and CF(0) - the membrane proton channel. CF(1) has five subunits: alpha(3), beta(3), gamma(1), delta(1), epsilon(1). CF(0) has three main subunits: a(1), b(2) and c(9-12). The alpha and beta chains form an alternating ring which encloses part of the gamma chain. CF(1) is attached to CF(0) by a central stalk formed by the gamma and epsilon chains, while a peripheral stalk is formed by the delta and b chains.

It is found in the cell inner membrane. Key component of the proton channel; it plays a direct role in the translocation of protons across the membrane. In Rickettsia rickettsii (strain Sheila Smith), this protein is ATP synthase subunit a.